Reading from the N-terminus, the 184-residue chain is Protein CPn_0803/CP_1068/CPj0803/CpB0832 (184 aa).

The protein belongs to the chlamydial CPn_0803/CT_584/TC_0873 family.

The chain is Protein CPn_0803/CP_1068/CPj0803/CpB0832 from Chlamydia pneumoniae (Chlamydophila pneumoniae).